Here is a 73-residue protein sequence, read N- to C-terminus: Dipeptidyl peptidase 3 (73 aa).

This sequence belongs to the peptidase M49 family. Requires Zn(2+) as cofactor.

The protein resides in the membrane. It catalyses the reaction Release of an N-terminal dipeptide from a peptide comprising four or more residues, with broad specificity. Also acts on dipeptidyl 2-naphthylamides.. In terms of biological role, degrades neuropeptide proctolin (RYLPT) by cleavage between Tyr and Leu residues. In Blaberus craniifer (Death's head cockroach), this protein is Dipeptidyl peptidase 3.